A 160-amino-acid chain; its full sequence is Baculoviral IAP repeat-containing protein 5.1 (160 aa).

Residues 27–97 (RLATFADWPF…KRSASCGFLS (71 aa)) form a BIR repeat. Threonine 43 is subject to Phosphothreonine; by CDK1. Zn(2+)-binding residues include cysteine 66, cysteine 69, histidine 86, and cysteine 93.

This sequence belongs to the IAP family. As to quaternary structure, component of the CPC at least composed of survivin/birc5, incenp, cdca8/borealin and/or cdca9/dasra-A, and aurkb/aurora-B. Interacts directly with incenp (via N-terminus), and may weakly interact with aurkb (via N-terminus) to stabilize the complex. Interacts with GTP-bound ran in both the S and M phases of the cell cycle. Also found in a complex with ubiquitin-mediated signaling proteins including at least usp9x/xFAM, nploc4/npl4 and ufd1. Ubiquitination is required for centrosome-targeting.

The protein resides in the cytoplasm. Its subcellular location is the nucleus. It localises to the chromosome. It is found in the centromere. The protein localises to the cytoskeleton. The protein resides in the spindle. Its function is as follows. Component of the chromosomal passenger complex (CPC), a complex that acts as a key regulator of mitosis. The CPC complex has essential functions at the centromere in ensuring correct chromosome alignment and segregation and is required for chromatin-induced microtubule stabilization and spindle assembly. Stimulates the mitotic kinase activity of aurkb/aurora-B in the CPC. Does not appear to exhibit anti-apoptotic activity. The sequence is that of Baculoviral IAP repeat-containing protein 5.1 (birc5.1) from Xenopus tropicalis (Western clawed frog).